The following is a 261-amino-acid chain: 5'-nucleotidase SurE (261 aa).

The a divalent metal cation site is built by aspartate 8, aspartate 9, serine 43, and asparagine 96.

The protein belongs to the SurE nucleotidase family. It depends on a divalent metal cation as a cofactor.

The protein resides in the cytoplasm. It carries out the reaction a ribonucleoside 5'-phosphate + H2O = a ribonucleoside + phosphate. In terms of biological role, nucleotidase that shows phosphatase activity on nucleoside 5'-monophosphates. This is 5'-nucleotidase SurE from Dinoroseobacter shibae (strain DSM 16493 / NCIMB 14021 / DFL 12).